The chain runs to 45 residues: MPSDYTSHYPVILIKKKKKKIAGMYRHSKRYLEIMSTASAQFVGN.

This is an uncharacterized protein from Saccharomyces cerevisiae (strain ATCC 204508 / S288c) (Baker's yeast).